A 1380-amino-acid polypeptide reads, in one-letter code: DNA-directed RNA polymerase subunit beta (1380 aa).

It belongs to the RNA polymerase beta chain family. As to quaternary structure, the RNAP catalytic core consists of 2 alpha, 1 beta, 1 beta' and 1 omega subunit. When a sigma factor is associated with the core the holoenzyme is formed, which can initiate transcription.

It catalyses the reaction RNA(n) + a ribonucleoside 5'-triphosphate = RNA(n+1) + diphosphate. Its function is as follows. DNA-dependent RNA polymerase catalyzes the transcription of DNA into RNA using the four ribonucleoside triphosphates as substrates. This Ehrlichia chaffeensis (strain ATCC CRL-10679 / Arkansas) protein is DNA-directed RNA polymerase subunit beta.